The chain runs to 506 residues: Cobyric acid synthase (506 aa).

The 198-residue stretch at 251-448 (DITIAIVQLP…LHGLFDSDAF (198 aa)) folds into the GATase cobBQ-type domain. Catalysis depends on Cys-332, which acts as the Nucleophile. His-440 is a catalytic residue.

Belongs to the CobB/CobQ family. CobQ subfamily.

Its pathway is cofactor biosynthesis; adenosylcobalamin biosynthesis. Functionally, catalyzes amidations at positions B, D, E, and G on adenosylcobyrinic A,C-diamide. NH(2) groups are provided by glutamine, and one molecule of ATP is hydrogenolyzed for each amidation. The sequence is that of Cobyric acid synthase from Salmonella dublin (strain CT_02021853).